We begin with the raw amino-acid sequence, 361 residues long: Chorismate synthase (361 aa).

Residues Arg48 and Arg54 each contribute to the NADP(+) site. FMN contacts are provided by residues 125–127 (RSS), 238–239 (NA), Gly278, 293–297 (KPTSS), and Arg319.

Belongs to the chorismate synthase family. As to quaternary structure, homotetramer. FMNH2 is required as a cofactor.

It catalyses the reaction 5-O-(1-carboxyvinyl)-3-phosphoshikimate = chorismate + phosphate. The protein operates within metabolic intermediate biosynthesis; chorismate biosynthesis; chorismate from D-erythrose 4-phosphate and phosphoenolpyruvate: step 7/7. Its function is as follows. Catalyzes the anti-1,4-elimination of the C-3 phosphate and the C-6 proR hydrogen from 5-enolpyruvylshikimate-3-phosphate (EPSP) to yield chorismate, which is the branch point compound that serves as the starting substrate for the three terminal pathways of aromatic amino acid biosynthesis. This reaction introduces a second double bond into the aromatic ring system. This Photorhabdus laumondii subsp. laumondii (strain DSM 15139 / CIP 105565 / TT01) (Photorhabdus luminescens subsp. laumondii) protein is Chorismate synthase.